The sequence spans 453 residues: Plasmepsin II (453 aa).

At 1-37 the chain is on the cytoplasmic side; it reads MDITVREHDFKHGFIKSNSTFDGLNIDNSKNKKKIQK. The propeptide occupies 1 to 124; the sequence is MDITVREHDF…SGLTKTNYLG (124 aa). A helical; Signal-anchor for type II membrane protein membrane pass occupies residues 38–58; that stretch reads GFQILYVLLFCSVMCGLFYYV. Residues 59–453 are Lumenal-facing; that stretch reads YENVWLQRDN…VGIALAKKNL (395 aa). The 308-residue stretch at 140–447 folds into the Peptidase A1 domain; it reads FYGDAEVGDN…DYDNQSVGIA (308 aa). D158 is an active-site residue. Cysteines 171 and 176 form a disulfide. The active site involves D338. C373 and C409 are oxidised to a cystine.

This sequence belongs to the peptidase A1 family. In terms of assembly, component of the hemozoin formation complex (HFC) composed of falcipains FP2A and/or FP2B, plasmepsins PMII, PMIII/HAP and PMIV, heme detoxifying protein HDP and falcilysin FLN. The HFC complex is involved in hemoglobin degradation and detoxification of heme in the food vacuole during the asexual blood stage. Not N-glycosylated. In terms of processing, proteolytically cleaved into the soluble active mature form in the digestive vacuole by cysteine protease falcipains; the process begins at the early ring stage. Proteolysis requires an acidic environment. In absence of falcipains, autoprocessing may serve as an alternate activation system.

It is found in the membrane. The protein resides in the vacuole lumen. It localises to the vacuole membrane. The catalysed reaction is Hydrolysis of the bonds linking certain hydrophobic residues in hemoglobin or globin. Also cleaves small molecules substrates such as Ala-Leu-Glu-Arg-Thr-Phe-|-Phe(NO2)-Ser-Phe-Pro-Thr.. Its activity is regulated as follows. Inhibited by pepstatin A. Inhibited by KNI derived compounds (KNI-10742, 10743, 10395, 10333, and 10343). In terms of biological role, during the asexual blood stage, participates in initial cleavage of native host hemoglobin (Hb) resulting in Hb denaturation. May cleave preferentially denatured hemoglobin that has been cleaved by PMI. Digestion of host Hb is an essential step which provides the parasite with amino acids for protein synthesis, and regulates osmolarity. This chain is Plasmepsin II, found in Plasmodium falciparum (isolate 3D7).